We begin with the raw amino-acid sequence, 234 residues long: Opacity protein opA65 (234 aa).

A signal peptide is located at residue Ala1. Positions 154–179 are disordered; sequence TVTPKPKNGTQGGPVKSTSPIPAYHE.

This sequence belongs to the opacity porin family.

It localises to the cell outer membrane. In terms of biological role, implicated in a number of adherence functions. OPA proteins are implicated in pathogenesis and are subject to phase variation. The polypeptide is Opacity protein opA65 (Neisseria gonorrhoeae).